A 219-amino-acid chain; its full sequence is 2-hydroxy-3-keto-5-methylthiopentenyl-1-phosphate phosphatase (219 aa).

The protein belongs to the HAD-like hydrolase superfamily. MtnX family.

It catalyses the reaction 2-hydroxy-5-methylsulfanyl-3-oxopent-1-enyl phosphate + H2O = 1,2-dihydroxy-5-(methylsulfanyl)pent-1-en-3-one + phosphate. It functions in the pathway amino-acid biosynthesis; L-methionine biosynthesis via salvage pathway; L-methionine from S-methyl-5-thio-alpha-D-ribose 1-phosphate: step 4/6. In terms of biological role, dephosphorylates 2-hydroxy-3-keto-5-methylthiopentenyl-1-phosphate (HK-MTPenyl-1-P) yielding 1,2-dihydroxy-3-keto-5-methylthiopentene (DHK-MTPene). This is 2-hydroxy-3-keto-5-methylthiopentenyl-1-phosphate phosphatase from Bacillus cereus (strain ATCC 14579 / DSM 31 / CCUG 7414 / JCM 2152 / NBRC 15305 / NCIMB 9373 / NCTC 2599 / NRRL B-3711).